Consider the following 918-residue polypeptide: DNA ligase 1 (918 aa).

Polar residues predominate over residues 1–15 (MQRSIMSFFQPTTTE). Residues 1–271 (MQRSIMSFFQ…DPTNYNPSKS (271 aa)) form a disordered region. Basic and acidic residues predominate over residues 16–54 (GKAKKPEKEIPSSIREKEPPPKVALKERNRAVPESDSPV). Residues Ser-50, Ser-52, Ser-66, and Ser-67 each carry the phosphoserine modification. A Phosphothreonine modification is found at Thr-78. The segment covering 81 to 92 (VQKPVSDSKQSS) has biased composition (low complexity). A compositionally biased stretch (polar residues) spans 100 to 114 (PENSPVFNCSPSMDI). Residues 120-130 (PKRRTARKQLP) are compositionally biased toward basic residues. At Lys-145 the chain carries N6-acetyllysine. Position 195 is a phosphothreonine (Thr-195). An N6-acetyllysine modification is found at Lys-227. Phosphoserine occurs at positions 230 and 231. At Thr-234 the chain carries Phosphothreonine. A compositionally biased stretch (basic and acidic residues) spans 240–259 (VKTEVKQEESDTPRKEETKG). Position 566 (Glu-566) interacts with ATP. Lys-568 acts as the N6-AMP-lysine intermediate in catalysis. ATP-binding residues include Arg-573 and Glu-621. Residue Glu-621 participates in Mg(2+) binding. An interaction with target DNA region spans residues 642-644 (KRK). Glu-720 is a Mg(2+) binding site. ATP contacts are provided by Lys-725 and Lys-744. Position 798 is a phosphothreonine (Thr-798). Phosphoserine is present on residues Ser-801, Ser-908, Ser-909, and Ser-913. The interval 881–918 (DKQPEQATTSDQVASLYRKQSQIQNQQSSDLDSDVEDY) is disordered. Positions 885 to 910 (EQATTSDQVASLYRKQSQIQNQQSSD) are enriched in polar residues.

The protein belongs to the ATP-dependent DNA ligase family. Interacts with PCNA. Interacts with POLB. Requires Mg(2+) as cofactor.

It is found in the nucleus. It catalyses the reaction ATP + (deoxyribonucleotide)n-3'-hydroxyl + 5'-phospho-(deoxyribonucleotide)m = (deoxyribonucleotide)n+m + AMP + diphosphate.. In terms of biological role, DNA ligase that seals nicks in double-stranded during DNA repair. Also involved in DNA replication and DNA recombination. This chain is DNA ligase 1 (Lig1), found in Rattus norvegicus (Rat).